We begin with the raw amino-acid sequence, 25 residues long: AKIIGIDGLTTNSWVAVLESDKVHV.

This sequence belongs to the heat shock protein 70 family.

Functionally, acts as a chaperone. The sequence is that of Chaperone protein DnaK (dnaK) from Acinetobacter calcoaceticus.